A 381-amino-acid chain; its full sequence is Beta-lactamase CMY-2 (381 aa).

An N-terminal signal peptide occupies residues 1–20 (MMKKSLCCALLLTASFSTFA). Ser84 (acyl-ester intermediate) is an active-site residue. A beta-lactam-binding residues include Ser84, Gln140, Tyr170, and Asn172.

This sequence belongs to the class-C beta-lactamase family.

It catalyses the reaction a beta-lactam + H2O = a substituted beta-amino acid. Its activity is regulated as follows. Inhibited by the beta-lactamase-blocking agents sulbactam, tazobactam, avibactam and 3-aminophenylboronic acid (APB). In terms of biological role, class C beta-lactamase which confers resistance to penicillins and cephalosporins. Has nitrocefin-, cefoxitin- and cefoperazone-hydrolyzing activities. The protein is Beta-lactamase CMY-2 of Klebsiella pneumoniae.